We begin with the raw amino-acid sequence, 297 residues long: tRNA dimethylallyltransferase (297 aa).

Residue 10–17 (GITASGKS) participates in ATP binding. 12-17 (TASGKS) lines the substrate pocket. Positions 36 to 39 (DSKQ) are interaction with substrate tRNA.

It belongs to the IPP transferase family. In terms of assembly, monomer. It depends on Mg(2+) as a cofactor.

The enzyme catalyses adenosine(37) in tRNA + dimethylallyl diphosphate = N(6)-dimethylallyladenosine(37) in tRNA + diphosphate. Functionally, catalyzes the transfer of a dimethylallyl group onto the adenine at position 37 in tRNAs that read codons beginning with uridine, leading to the formation of N6-(dimethylallyl)adenosine (i(6)A). This chain is tRNA dimethylallyltransferase, found in Wolbachia sp. subsp. Brugia malayi (strain TRS).